Here is a 131-residue protein sequence, read N- to C-terminus: Profilin-4 (131 aa).

Cysteine 13 and cysteine 115 are joined by a disulfide. Positions 81-97 (AVIRGKKGAGGITVKKT) match the Involved in PIP2 interaction motif. Residue threonine 111 is modified to Phosphothreonine.

It belongs to the profilin family. As to quaternary structure, occurs in many kinds of cells as a complex with monomeric actin in a 1:1 ratio. Post-translationally, phosphorylated by MAP kinases.

It is found in the cytoplasm. The protein resides in the cytoskeleton. Functionally, binds to actin and affects the structure of the cytoskeleton. At high concentrations, profilin prevents the polymerization of actin, whereas it enhances it at low concentrations. The polypeptide is Profilin-4 (Olea europaea (Common olive)).